A 95-amino-acid chain; its full sequence is Mammaglobin-B (95 aa).

The first 18 residues, Met-1–Ala-18, serve as a signal peptide directing secretion. Residue Asn-68 is glycosylated (N-linked (GlcNAc...) asparagine).

Heterodimer of a lipophilin A and a lipophilin C (mammaglobin B) monomer associated head to head. Expressed in thymus, trachea, kidney, steroid responsive tissues (prostate, testis, uterus, breast and ovary) and salivary gland.

The protein localises to the secreted. Functionally, may bind androgens and other steroids, may also bind estramustine, a chemotherapeutic agent used for prostate cancer. May be under transcriptional regulation of steroid hormones. In Homo sapiens (Human), this protein is Mammaglobin-B (SCGB2A1).